Consider the following 510-residue polypeptide: Hepatic triacylglycerol lipase (510 aa).

The first 21 residues, 1–21, serve as a signal peptide directing secretion; that stretch reads MGNPLQISIFLVFCIFIQSSA. A glycan (N-linked (GlcNAc...) asparagine) is linked at asparagine 79. The Nucleophile role is filled by serine 169. The Charge relay system role is filled by aspartate 195. The segment at 255–278 is essential for determining substrate specificity; it reads CHFLELYKHIAEHGLNAITQTIKC. The active-site Charge relay system is the histidine 280. In terms of domain architecture, PLAT spans 353 to 487; the sequence is YHYQFKIQFI…HPSQEKVFVN (135 aa). The N-linked (GlcNAc...) asparagine glycan is linked to asparagine 398.

It belongs to the AB hydrolase superfamily. Lipase family. In terms of assembly, homodimer.

Its subcellular location is the secreted. It carries out the reaction a triacylglycerol + H2O = a diacylglycerol + a fatty acid + H(+). It catalyses the reaction a 1-acyl-sn-glycero-3-phosphocholine + H2O = sn-glycerol 3-phosphocholine + a fatty acid + H(+). The catalysed reaction is a 1,2-diacyl-sn-glycero-3-phosphocholine + H2O = a 2-acyl-sn-glycero-3-phosphocholine + a fatty acid + H(+). The enzyme catalyses 1,2,3-tri-(9Z-octadecenoyl)-glycerol + H2O = di-(9Z)-octadecenoylglycerol + (9Z)-octadecenoate + H(+). It carries out the reaction 1,2-di-(9Z-octadecenoyl)-sn-glycero-3-phosphocholine + H2O = (9Z-octadecenoyl)-sn-glycero-3-phosphocholine + (9Z)-octadecenoate + H(+). It catalyses the reaction 1,2,3-tributanoylglycerol + H2O = dibutanoylglycerol + butanoate + H(+). The catalysed reaction is 1,2-dihexadecanoyl-sn-glycero-3-phosphocholine + H2O = hexadecanoyl-sn-glycero-3-phosphocholine + hexadecanoate + H(+). The enzyme catalyses 1,2-di-(9Z-octadecenoyl)-sn-glycerol + H2O = 2-(9Z-octadecenoyl)-glycerol + (9Z)-octadecenoate + H(+). It carries out the reaction 1,2,3-tri-(9Z-octadecenoyl)-glycerol + H2O = 2,3-di-(9Z)-octadecenoyl-sn-glycerol + (9Z)-octadecenoate + H(+). It catalyses the reaction 1-(9Z-octadecenoyl)-sn-glycero-3-phospho-L-serine + H2O = sn-glycero-3-phospho-L-serine + (9Z)-octadecenoate + H(+). The catalysed reaction is 1-hexadecanoyl-sn-glycero-3-phosphocholine + H2O = sn-glycerol 3-phosphocholine + hexadecanoate + H(+). The enzyme catalyses 1,3-di-(9Z-octadecenoyl)-glycerol + H2O = 3-(9Z-octadecenoyl)-sn-glycerol + (9Z)-octadecenoate + H(+). Catalyzes the hydrolysis of triglycerides and phospholipids present in circulating plasma lipoproteins, including chylomicrons, intermediate density lipoproteins (IDL), low density lipoproteins (LDL) of large size and high density lipoproteins (HDL), releasing free fatty acids (FFA) and smaller lipoprotein particles. Also exhibits lysophospholipase activity. Can hydrolyze both neutral lipid and phospholipid substrates but shows a greater binding affinity for neutral lipid substrates than phospholipid substrates. In native LDL, preferentially hydrolyzes the phosphatidylcholine species containing polyunsaturated fatty acids at sn-2 position. The polypeptide is Hepatic triacylglycerol lipase (Lipc) (Mus musculus (Mouse)).